The following is a 387-amino-acid chain: Phosphoglycerate kinase (387 aa).

Residues 21–23 (DLN), Arg-36, 59–62 (HLGR), Arg-113, and Arg-146 each bind substrate. ATP is bound by residues Lys-197, Glu-314, and 340 to 343 (GGDT).

The protein belongs to the phosphoglycerate kinase family. As to quaternary structure, monomer.

It localises to the cytoplasm. The enzyme catalyses (2R)-3-phosphoglycerate + ATP = (2R)-3-phospho-glyceroyl phosphate + ADP. The protein operates within carbohydrate degradation; glycolysis; pyruvate from D-glyceraldehyde 3-phosphate: step 2/5. This Pseudomonas fluorescens (strain SBW25) protein is Phosphoglycerate kinase.